A 232-amino-acid polypeptide reads, in one-letter code: Ribosomal RNA small subunit methyltransferase G (232 aa).

Residues methionine 1–leucine 24 are disordered. S-adenosyl-L-methionine contacts are provided by residues glycine 91, leucine 96, alanine 142 to glutamate 143, and arginine 160.

It belongs to the methyltransferase superfamily. RNA methyltransferase RsmG family.

The protein resides in the cytoplasm. In terms of biological role, specifically methylates the N7 position of guanine in position 518 of 16S rRNA. In Corynebacterium efficiens (strain DSM 44549 / YS-314 / AJ 12310 / JCM 11189 / NBRC 100395), this protein is Ribosomal RNA small subunit methyltransferase G.